A 194-amino-acid chain; its full sequence is PRELI domain containing protein 3B (194 aa).

The PRELI/MSF1 domain occupies 1-172; it reads MKIWTSEHVF…VIHKLNAEIE (172 aa). 2 positions are modified to phosphoserine: Ser-46 and Ser-51.

Belongs to the slowmo family.

This chain is PRELI domain containing protein 3B (PRELID3B), found in Bos taurus (Bovine).